Consider the following 377-residue polypeptide: Leucine aminopeptidase A (377 aa).

Positions methionine 1 to alanine 18 are cleaved as a signal peptide. Positions isoleucine 19 to threonine 79 are excised as a propeptide. N-linked (GlcNAc...) asparagine glycosylation is present at asparagine 87. 4 residues coordinate Zn(2+): histidine 176, aspartate 195, glutamate 234, and aspartate 261. The N-linked (GlcNAc...) asparagine glycan is linked to asparagine 288. Cysteines 310 and 314 form a disulfide. A Zn(2+)-binding site is contributed by histidine 343.

Belongs to the peptidase M28 family. M28E subfamily. In terms of assembly, monomer. The cofactor is Zn(2+).

Its subcellular location is the secreted. Its activity is regulated as follows. Calcium, magnesium and manganese cations reduce peptidase activity to 20.3-51.3 percent. The metal ion chelating reagent EDTA almost completely inhibits activity. The protease inhibitor bacitracin and the aminopeptidase B inhibitor bestatin, as well as DTT and beta-mercaptoethanol act also as lap A inhibitorsD. In terms of biological role, extracellular aminopeptidase that allows assimilation of proteinaceous substrates. The polypeptide is Leucine aminopeptidase A (lapA) (Aspergillus oryzae (strain ATCC 42149 / RIB 40) (Yellow koji mold)).